The chain runs to 816 residues: Probable transcriptional regulator SLK2 (816 aa).

2 disordered regions span residues 133 to 153 (HDPS…SQTN) and 166 to 189 (SFFQ…KQDD). 2 stretches are compositionally biased toward polar residues: residues 139–153 (LGGS…SQTN) and 166–176 (SFFQDPNNLTQ). Residues 307 to 554 (PSESSIVYWR…DQKVGPIEAL (248 aa)) form a dimerization region. The Nuclear localization signal motif lies at 316-330 (RKFVTEYFSPRAKKR). Polar residues-rich tracts occupy residues 644–662 (IQQE…QGTS) and 672–711 (PSIS…SGNQ). The disordered stretch occupies residues 644–711 (IQQEPSRNRS…QPPSCSSGNQ (68 aa)).

It belongs to the adn1/SEU family. Forms corepressor complexes with LUH; LUH is the transcription repressor subunit and SLK2 the specific DNA-binding adapters. As to expression, expressed in young flower meristems, ovules and the carpel margin meristem.

The protein resides in the nucleus. Its function is as follows. Probable transcription regulator that functions in the development of the carpel margin meristem similarly to SEUSS (SEU). In association with SEU, supports organ development from meristematic regions by facilitating auxin response and thus organ initiation, and by sustaining meristematic potential through the maintenance of PHABULOSA expression. DNA-binding adapter subunit of the SEU-SLK2 transcriptional corepressor of abiotic stress (e.g. salt and osmotic stress) response genes. The sequence is that of Probable transcriptional regulator SLK2 (SLK2) from Arabidopsis thaliana (Mouse-ear cress).